The chain runs to 249 residues: Electron transfer flavoprotein subunit beta (249 aa).

It belongs to the ETF beta-subunit/FixA family. As to quaternary structure, heterodimer of an alpha and a beta subunit. Requires FAD as cofactor. It depends on AMP as a cofactor.

Its function is as follows. The electron transfer flavoprotein serves as a specific electron acceptor for other dehydrogenases. It transfers the electrons to the main respiratory chain via ETF-ubiquinone oxidoreductase (ETF dehydrogenase). This chain is Electron transfer flavoprotein subunit beta (etfB), found in Pseudomonas aeruginosa (strain ATCC 15692 / DSM 22644 / CIP 104116 / JCM 14847 / LMG 12228 / 1C / PRS 101 / PAO1).